Consider the following 626-residue polypeptide: Endo-1,3(4)-beta-glucanase xgeA (626 aa).

The N-terminal stretch at 1-25 (MSSSLMRRVGSLAASAIIFPGIAHA) is a signal peptide. One can recognise a GH16 domain in the interval 33-286 (ESWEGEKILN…WAGGVFGDSG (254 aa)). N61 carries N-linked (GlcNAc...) asparagine glycosylation. Residue E142 is the Nucleophile of the active site. The active-site Proton donor is E147. The segment covering 477-494 (ASTDAAAATTPAAEPHPS) has biased composition (low complexity). The tract at residues 477–533 (ASTDAAAATTPAAEPHPSNAETPADSKSSADAVTAQATKTTIAVNTPNPATDSASSV) is disordered. Over residues 495-533 (NAETPADSKSSADAVTAQATKTTIAVNTPNPATDSASSV) the composition is skewed to polar residues. G603 carries GPI-anchor amidated glycine lipidation. A propeptide spans 604 to 626 (VGSKVSISASVAIAAFVMLLLVN) (removed in mature form).

Belongs to the glycosyl hydrolase 16 family.

It is found in the cell membrane. It catalyses the reaction Endohydrolysis of (1-&gt;3)- or (1-&gt;4)-linkages in beta-D-glucans when the glucose residue whose reducing group is involved in the linkage to be hydrolyzed is itself substituted at C-3.. Functionally, mixed-linked glucanase involved in the degradation of complex natural cellulosic substrates. Active on laminarin. lichenan, soluble carboxymethyl cellulose but not on pustulan. The polypeptide is Endo-1,3(4)-beta-glucanase xgeA (xgeA) (Emericella nidulans (strain FGSC A4 / ATCC 38163 / CBS 112.46 / NRRL 194 / M139) (Aspergillus nidulans)).